A 589-amino-acid polypeptide reads, in one-letter code: Aspartate--tRNA ligase (589 aa).

Glu172 lines the L-aspartate pocket. The tract at residues 196-199 is aspartate; that stretch reads QLFK. Arg218 serves as a coordination point for L-aspartate. Residues 218-220 and Gln227 each bind ATP; that span reads RDE. L-aspartate is bound at residue His449. Glu483 is an ATP binding site. L-aspartate is bound at residue Arg490. 535–538 is an ATP binding site; sequence GLDR.

It belongs to the class-II aminoacyl-tRNA synthetase family. Type 1 subfamily. In terms of assembly, homodimer.

It localises to the cytoplasm. The enzyme catalyses tRNA(Asp) + L-aspartate + ATP = L-aspartyl-tRNA(Asp) + AMP + diphosphate. Catalyzes the attachment of L-aspartate to tRNA(Asp) in a two-step reaction: L-aspartate is first activated by ATP to form Asp-AMP and then transferred to the acceptor end of tRNA(Asp). This Actinobacillus succinogenes (strain ATCC 55618 / DSM 22257 / CCUG 43843 / 130Z) protein is Aspartate--tRNA ligase.